Here is a 260-residue protein sequence, read N- to C-terminus: Vesicle-associated membrane protein 7B (260 aa).

Over 1–189 the chain is Cytoplasmic; sequence MPIIYSLVAR…KCAMWWKNVK (189 aa). In terms of domain architecture, Longin spans 7-110; the sequence is LVARGSSVLA…GMNSDFSRTL (104 aa). The v-SNARE coiled-coil homology domain occupies 125 to 186; that stretch reads TMSRTMAEID…KQLKCAMWWK (62 aa). A helical; Anchor for type IV membrane protein transmembrane segment spans residues 190–210; it reads LMLVLGAIVLIIIFIIVMSYC. Topologically, residues 211-260 are vesicular; that stretch reads DGFRSGSKCRSSPSSNSTPTPTPTETPTPTPTPTSTPTPSQLLETLLNQF. Positions 215 to 250 are disordered; it reads SGSKCRSSPSSNSTPTPTPTETPTPTPTPTSTPTPS. Pro residues predominate over residues 230–246; it reads TPTPTETPTPTPTPTST.

The protein belongs to the synaptobrevin family.

The protein resides in the cytoplasmic vesicle. It localises to the secretory vesicle membrane. Its subcellular location is the golgi apparatus. The protein localises to the trans-Golgi network membrane. It is found in the late endosome membrane. The protein resides in the lysosome membrane. It localises to the endoplasmic reticulum membrane. Its subcellular location is the phagosome membrane. Involved in the targeting and/or fusion of transport vesicles to their target membrane during transport of proteins from the early endosome to the lysosome. Required for heterotypic fusion of late endosomes with lysosomes and homotypic lysosomal fusion. The sequence is that of Vesicle-associated membrane protein 7B from Dictyostelium discoideum (Social amoeba).